We begin with the raw amino-acid sequence, 108 residues long: Zinc metalloproteinase/disintegrin (108 aa).

The 19-residue stretch at 1–19 folds into the Peptidase M12B domain; it reads NEYQTYLTDRNPQCILNEP. Positions 20-35 are excised as a propeptide; the sequence is LRTDTVSTPVSGNELL. Residues 27 to 108 form the Disintegrin domain; sequence TPVSGNELLE…ADCPRNGFYG (82 aa). 6 cysteine pairs are disulfide-bonded: cysteine 41–cysteine 56, cysteine 43–cysteine 51, cysteine 50–cysteine 73, cysteine 64–cysteine 70, cysteine 69–cysteine 94, and cysteine 82–cysteine 101. Residues 86–88 carry the Cell attachment site; atypical (KGD) motif; sequence KGD.

Belongs to the venom metalloproteinase (M12B) family. P-II subfamily. P-IIa sub-subfamily. Monomeric (disintegrin). The cofactor is Zn(2+). Expressed by the venom gland.

The protein localises to the secreted. Its function is as follows. Impairs hemostasis in the envenomed animal. Functionally, inhibits platelet aggregation induced by ADP, thrombin, platelet-activating factor and collagen. Acts by inhibiting fibrinogen interaction with platelet receptors GPIIb/GPIIIa (ITGA2B/ITGB3). The sequence is that of Zinc metalloproteinase/disintegrin from Gloydius brevicauda (Korean slamosa snake).